The following is a 367-amino-acid chain: Cellular tumor antigen p53 (367 aa).

The segment at 1-47 (MEEENISLPLSQDTFQDLWDNVSAPPISTIQTAALENEAWPAERQMN) is transcription activation (acidic). The DNA-binding element occupies 86–273 (DYPGEYGFKL…KTEETNSTKM (188 aa)). Zn(2+) is bound by residues Cys-160, His-163, Cys-219, and Cys-223. Positions 254–261 (RVCACPGR) are interaction with DNA. The segment covering 262-279 (DRKTEETNSTKMQNDAKD) has biased composition (basic and acidic residues). 2 disordered regions span residues 262–306 (DRKT…AEED) and 332–367 (DLLE…SDSD). Residues 282–300 (KRKSVPTPDSTTIKKSKTA) carry the Bipartite nuclear localization signal motif. The span at 291–302 (STTIKKSKTASS) shows a compositional bias: low complexity. The oligomerization stretch occupies residues 308–337 (NEVYTLQIRGRKRYEMLKKINDGLDLLENK). The Nuclear export signal motif lies at 322-333 (EMLKKINDGLDL). Residues 342-363 (ATHRPDGPIPPSGKRLLHRGEK) form a basic (repression of DNA-binding) region.

It belongs to the p53 family. Binds DNA as a homotetramer. Requires Zn(2+) as cofactor.

The protein resides in the cytoplasm. Its subcellular location is the nucleus. In terms of biological role, multifunctional transcription factor that induces cell cycle arrest, DNA repair or apoptosis upon binding to its target DNA sequence. Acts as a tumor suppressor in many tumor types; induces growth arrest or apoptosis depending on the physiological circumstances and cell type. Negatively regulates cell division by controlling expression of a set of genes required for this process. One of the activated genes is an inhibitor of cyclin-dependent kinases. Apoptosis induction seems to be mediated either by stimulation of BAX and FAS antigen expression, or by repression of Bcl-2 expression. This chain is Cellular tumor antigen p53 (tp53), found in Tetraodon miurus (Congo puffer).